The following is a 278-amino-acid chain: Dermonecrotic toxin LspiSicTox-betaIE2iii (278 aa).

Residue His5 is part of the active site. Mg(2+) is bound by residues Glu25 and Asp27. His41 functions as the Nucleophile in the catalytic mechanism. Disulfide bonds link Cys45–Cys51 and Cys47–Cys190. Asp85 is a Mg(2+) binding site.

This sequence belongs to the arthropod phospholipase D family. Class II subfamily. Requires Mg(2+) as cofactor. In terms of tissue distribution, expressed by the venom gland.

Its subcellular location is the secreted. The catalysed reaction is an N-(acyl)-sphingosylphosphocholine = an N-(acyl)-sphingosyl-1,3-cyclic phosphate + choline. It carries out the reaction an N-(acyl)-sphingosylphosphoethanolamine = an N-(acyl)-sphingosyl-1,3-cyclic phosphate + ethanolamine. It catalyses the reaction a 1-acyl-sn-glycero-3-phosphocholine = a 1-acyl-sn-glycero-2,3-cyclic phosphate + choline. The enzyme catalyses a 1-acyl-sn-glycero-3-phosphoethanolamine = a 1-acyl-sn-glycero-2,3-cyclic phosphate + ethanolamine. Functionally, dermonecrotic toxins cleave the phosphodiester linkage between the phosphate and headgroup of certain phospholipids (sphingolipid and lysolipid substrates), forming an alcohol (often choline) and a cyclic phosphate. This toxin acts on sphingomyelin (SM). It may also act on ceramide phosphoethanolamine (CPE), lysophosphatidylcholine (LPC) and lysophosphatidylethanolamine (LPE), but not on lysophosphatidylserine (LPS), and lysophosphatidylglycerol (LPG). It acts by transphosphatidylation, releasing exclusively cyclic phosphate products as second products. Induces dermonecrosis, hemolysis, increased vascular permeability, edema, inflammatory response, and platelet aggregation. This Loxosceles spinulosa (Recluse spider) protein is Dermonecrotic toxin LspiSicTox-betaIE2iii.